The following is a 300-amino-acid chain: MEPPVPQSSVPVNPSSVMVQPLLDSRAPHSRLQHPLTILPIDQMKTSHVENDYIDNPSLAPATGPKRPRGGPPELAPTPARCDQDITHHWISFSGRPSSVSSSSSTSSDQRLLDHMAPPPVAEQASPRAVRLQPKVVHCKPLDLKGPTAPPELDKHFLLCEACGKCKCKECASPRTLPSCWVCNQECLCSAQTLVNYGTCMCLVQGIFYHCTNEDDEGSCADHPCSCSGSNCCARWSFMGALSVVLPCLLCYLPATGCVKLAQRGYDRLRRPGCRCKHTNSVICKAASGDTKTSRSDKPF.

M1 carries the N-acetylmethionine modification. 2 disordered regions span residues 1–28 and 52–114; these read MEPP…SRAP and DYID…RLLD. Composition is skewed to low complexity over residues 7 to 21 and 92 to 108; these read QSSV…MVQP and SFSG…STSS. S126 carries the phosphoserine modification. One can recognise an SPR domain in the interval 167–274; that stretch reads KCKECASPRT…GYDRLRRPGC (108 aa).

This sequence belongs to the sprouty family. Interacts (via C-terminus) with TESK1 (via both C- and N-termini); the interaction inhibits TESK1 kinase activity. Interacts with RAF1. Interacts with CAV1 (via C-terminus). In terms of tissue distribution, expressed in the embryo and adult tissues including heart, brain, lung, kidney, and skeletal muscle.

The protein localises to the cytoplasm. The protein resides in the cell projection. It localises to the ruffle membrane. Functionally, suppresses the insulin receptor and EGFR-transduced MAPK signaling pathway, but does not inhibit MAPK activation by a constitutively active mutant Ras. Probably impairs the formation of GTP-Ras. Inhibits Ras-independent, but not Ras-dependent, activation of RAF1. Represses integrin-mediated cell spreading via inhibition of TESK1-mediated phosphorylation of cofilin. This Mus musculus (Mouse) protein is Protein sprouty homolog 4 (Spry4).